The following is a 147-amino-acid chain: Peptide methionine sulfoxide reductase MsrB (147 aa).

The region spanning Lys8–Lys131 is the MsrB domain. Residue Cys120 is the Nucleophile of the active site.

This sequence belongs to the MsrB Met sulfoxide reductase family.

It catalyses the reaction L-methionyl-[protein] + [thioredoxin]-disulfide + H2O = L-methionyl-(R)-S-oxide-[protein] + [thioredoxin]-dithiol. The protein is Peptide methionine sulfoxide reductase MsrB of Clostridium perfringens (strain ATCC 13124 / DSM 756 / JCM 1290 / NCIMB 6125 / NCTC 8237 / Type A).